Reading from the N-terminus, the 221-residue chain is Chaperone protein TorD (221 aa).

It belongs to the TorD/DmsD family. TorD subfamily.

Its subcellular location is the cytoplasm. Involved in the biogenesis of TorA. Acts on TorA before the insertion of the molybdenum cofactor and, as a result, probably favors a conformation of the apoenzyme that is competent for acquiring the cofactor. The polypeptide is Chaperone protein TorD (Shewanella pealeana (strain ATCC 700345 / ANG-SQ1)).